Reading from the N-terminus, the 263-residue chain is (E)-2-((N-methylformamido)methylene)succinate hydrolase (263 aa).

S96 functions as the Nucleophile in the catalytic mechanism. Residues N120 and H241 contribute to the active site.

Belongs to the AB hydrolase superfamily. As to quaternary structure, monomer.

It catalyses the reaction (E)-2-((N-methylformamido) methylene)succinate + 2 H2O + H(+) = succinate semialdehyde + methylamine + formate + CO2. Its function is as follows. Involved in the degradation of the pyridine ring of trigonelline (TG; N-methylnicotinate) into succinate and methylamine as carbon and nitrogen sources, respectively. Catalyzes the hydrolysis of (E)-2-((N-methylformamido)methylene)succinate (MFMS) into formic acid, succinate semialdehyde (SSA), methylamine and carbon dioxide. This is (E)-2-((N-methylformamido)methylene)succinate hydrolase from Acinetobacter baylyi (strain ATCC 33305 / BD413 / ADP1).